A 114-amino-acid chain; its full sequence is rRNA-processing protein cgrA (114 aa).

The tract at residues 1–96 (MSASESAPSA…YDKMAEKMHR (96 aa)) is disordered. The stretch at 40–101 (AKRLEARKHQ…EKMHRKRVER (62 aa)) forms a coiled coil. Over residues 41-93 (KRLEARKHQEAVKEHERELKEEKEAERQAHIQRIKDRRAAKEEKERYDKMAEK) the composition is skewed to basic and acidic residues.

Belongs to the CGR1 family.

The protein resides in the nucleus. Its subcellular location is the nucleolus. In terms of biological role, involved in nucleolar integrity and required for processing of the pre-rRNA for the 60S ribosome subunit. This chain is rRNA-processing protein cgrA (cgrA), found in Aspergillus terreus (strain NIH 2624 / FGSC A1156).